The chain runs to 51 residues: Insulin (51 aa).

3 disulfides stabilise this stretch: cysteine 7/cysteine 37, cysteine 19/cysteine 50, and cysteine 36/cysteine 41.

It belongs to the insulin family. In terms of assembly, heterodimer of a B chain and an A chain linked by two disulfide bonds.

The protein localises to the secreted. Insulin decreases blood glucose concentration. It increases cell permeability to monosaccharides, amino acids and fatty acids. It accelerates glycolysis, the pentose phosphate cycle, and glycogen synthesis in liver. The polypeptide is Insulin (INS) (Elephas maximus (Indian elephant)).